The chain runs to 251 residues: Cytochrome c oxidase subunit 2 (251 aa).

Residues 1-15 constitute a propeptide, removed in mature form; it reads MLDLLRLQLTTFIMN. The Mitochondrial intermembrane portion of the chain corresponds to 16–30; it reads DVPTPYACYFQDSAT. The chain crosses the membrane as a helical span at residues 31–64; the sequence is PNQEGILELHDNIMFYLLVILGLVSWMLYTIVMT. Residues 65 to 78 are Mitochondrial matrix-facing; that stretch reads YSKNPIAYKYIKHG. A helical membrane pass occupies residues 79-108; the sequence is QTIEVIWTIFPAVILLIIAFPSFILLYLCD. Topologically, residues 109 to 251 are mitochondrial intermembrane; the sequence is EVISPAMTIK…PKFLEWLNEQ (143 aa). Cu cation contacts are provided by H186, C221, E223, C225, H229, and M232. Residue E223 participates in Mg(2+) binding.

This sequence belongs to the cytochrome c oxidase subunit 2 family. In terms of assembly, component of the cytochrome c oxidase (complex IV, CIV), a multisubunit enzyme composed of 12 subunits. The complex is composed of a catalytic core of 3 subunits COX1, COX2 and COX3, encoded in the mitochondrial DNA, and 9 supernumerary subunits COX4, COX5A (or COX5B), COX6, COX7, COX8, COX9, COX12, COX13 and COX26, which are encoded in the nuclear genome. The complex exists as a monomer or a dimer and forms supercomplexes (SCs) in the inner mitochondrial membrane with a dimer of ubiquinol-cytochrome c oxidoreductase (cytochrome b-c1 complex, complex III, CIII), resulting in 2 different assemblies (supercomplexes III(2)IV and III(2)IV(2)). It depends on Cu cation as a cofactor. In terms of processing, the N-terminal sequence of COX2 is processed by IMP1.

The protein localises to the mitochondrion inner membrane. The catalysed reaction is 4 Fe(II)-[cytochrome c] + O2 + 8 H(+)(in) = 4 Fe(III)-[cytochrome c] + 2 H2O + 4 H(+)(out). Functionally, component of the cytochrome c oxidase, the last enzyme in the mitochondrial electron transport chain which drives oxidative phosphorylation. The respiratory chain contains 3 multisubunit complexes succinate dehydrogenase (complex II, CII), ubiquinol-cytochrome c oxidoreductase (cytochrome b-c1 complex, complex III, CIII) and cytochrome c oxidase (complex IV, CIV), that cooperate to transfer electrons derived from NADH and succinate to molecular oxygen, creating an electrochemical gradient over the inner membrane that drives transmembrane transport and the ATP synthase. Cytochrome c oxidase is the component of the respiratory chain that catalyzes the reduction of oxygen to water. Electrons originating from reduced cytochrome c in the intermembrane space (IMS) are transferred via the dinuclear copper A center (CU(A)) of COX2 and heme A of COX1 to the active site in COX1, a binuclear center (BNC) formed by heme A3 and copper B (CU(B)). The BNC reduces molecular oxygen to 2 water molecules unsing 4 electrons from cytochrome c in the IMS and 4 protons from the mitochondrial matrix. COX2 is a catalytic core subunit which transfers the electrons from cytochrome c via its dinuclear copper A center (CU(A)) to the BNC of the COX1. This Saccharomyces cerevisiae (strain ATCC 204508 / S288c) (Baker's yeast) protein is Cytochrome c oxidase subunit 2 (COX2).